The chain runs to 1172 residues: Phytochrome B (1172 aa).

Positions 1–16 are enriched in gly residues; sequence MVSGVGGSGGGRGGGR. The segment at 1 to 54 is disordered; sequence MVSGVGGSGGGRGGGRGGEEEPSSSHTPNNRRGGEQAQSSGTKSLRPRSNTESM. Residues 24 to 54 show a composition bias toward polar residues; sequence SSHTPNNRRGGEQAQSSGTKSLRPRSNTESM. The GAF domain maps to 252–433; the sequence is DIKLLCDTVV…AFGLQLNMEL (182 aa). Phytochromobilin is bound at residue cysteine 357. PAS domains are found at residues 652–723 and 786–857; these read VARE…LRGD and DYKA…MIVL. The region spanning 934–1153 is the Histidine kinase domain; the sequence is YICQVIKNPL…LIILELPVPR (220 aa).

This sequence belongs to the phytochrome family. In terms of assembly, homodimer. Interacts with ADO1 and PKS4. Stabilized by interactions with PAPP5 and FYPP3 which are enhanced in the phosphorylated Pfr form. Interacts with VOZ1 and VOZ2. Binds, via its photosensory domain, to PTAC12/HMR/PAP5 when photoactivated; this interaction stimulates its localization to photobodies. Interacts with CRY1 specifically when in the dark/far-red (Pr) state, but not when red light-activated (Pfr). Interacts with PIF4 and PIF5 in response to low blue light (LBL). Component of a red light-dependent nuclear complex made of PHL, PHYB and CO. Interacts directly with PHL. Binds to UNE10/PIF8 when red light-activated (Pfr). When light-activated, interacts with PCH1 and PCHL. Associated with DRT111/RSN2/SFPS, SMP2 and SWAP1 in nuclear photobodies upon response to red light (Pfr form). Post-translationally, contains one covalently linked phytochromobilin chromophore. In terms of tissue distribution, expressed in fruits, flowers, leaves, stems, seedlings and roots.

It is found in the cytoplasm. The protein resides in the nucleus. Its subcellular location is the nucleoplasm. The protein localises to the nucleus speckle. In terms of biological role, regulatory photoreceptor which exists in two forms that are reversibly interconvertible by light: the Pr form that absorbs maximally in the red region of the spectrum and the Pfr form that absorbs maximally in the far-red region. Photoconversion of Pr to Pfr induces an array of morphogenetic responses, whereas reconversion of Pfr to Pr cancels the induction of those responses. Pfr controls the expression of a number of nuclear genes including those encoding the small subunit of ribulose-bisphosphate carboxylase, chlorophyll A/B binding protein, protochlorophyllide reductase, rRNA, etc. It also controls the expression of its own gene(s) in a negative feedback fashion. Involved in the flowering time regulation. Involved in light-regulated circadian phase control that triggers stomatal aperture, stomatal conductance, and CO(2) assimilation. Implicated in red light perception, and, to a lower extent, in blue light signaling. Controls thermomorphogenesis in the daytime and regulates temperature responses by associating with the promoters of key target genes in a temperature-dependent manner and subsequently repressing their expression in a PIF4-dependent manner (temperature-responsive transcriptional regulator); this process requires PTAC12/HMR/PAP5 (transcriptional activator). Thermal timer that integrates temperature information over the course of the night. Detabilizes UNE10/PIF8 in red light. The protein is Phytochrome B of Arabidopsis thaliana (Mouse-ear cress).